We begin with the raw amino-acid sequence, 321 residues long: Type 3 secretion system translocon protein SctB (321 aa).

The chain crosses the membrane as a helical span at residues 99–119 (AALIGGAISSVLGILGSFAAI).

The protein belongs to the SctB/EspB family. In terms of assembly, the core secretion machinery of the T3SS is composed of approximately 20 different proteins, including cytoplasmic components, a base, an export apparatus and a needle. This subunit is involved in the formation of a pore, called the translocon, in host membrane.

It localises to the secreted. Its subcellular location is the cell surface. The protein resides in the host membrane. In terms of biological role, component of the type III secretion system (T3SS), also called injectisome, which is used to inject bacterial effector proteins into eukaryotic host cells. EspD and EspB are inserted into the host membrane where they form a pore and allow the translocation of effector proteins into the cytosol of target cells. Necessary for intimate attachment to epithelial cells. This is Type 3 secretion system translocon protein SctB from Escherichia coli O127:H6 (strain E2348/69 / EPEC).